The chain runs to 164 residues: MRALGIDPGTATMGWGIVEFNNGHLRLIDVGALTTPAGMPHPERLLQLYNGLRAIIERLRPDTAAVEELFFGKNVNTALTVGQARGVALLALAQAGIPVHEYKPLAVKQAVAGYGGADKRQMQEMVRLTLGLATIPRPDDAADALAIAICHAYTAPTLQRFGLS.

Active-site residues include Asp-7, Glu-67, and Asp-140. Mg(2+) is bound by residues Asp-7, Glu-67, and Asp-140.

This sequence belongs to the RuvC family. In terms of assembly, homodimer which binds Holliday junction (HJ) DNA. The HJ becomes 2-fold symmetrical on binding to RuvC with unstacked arms; it has a different conformation from HJ DNA in complex with RuvA. In the full resolvosome a probable DNA-RuvA(4)-RuvB(12)-RuvC(2) complex forms which resolves the HJ. Mg(2+) is required as a cofactor.

It localises to the cytoplasm. It catalyses the reaction Endonucleolytic cleavage at a junction such as a reciprocal single-stranded crossover between two homologous DNA duplexes (Holliday junction).. Its function is as follows. The RuvA-RuvB-RuvC complex processes Holliday junction (HJ) DNA during genetic recombination and DNA repair. Endonuclease that resolves HJ intermediates. Cleaves cruciform DNA by making single-stranded nicks across the HJ at symmetrical positions within the homologous arms, yielding a 5'-phosphate and a 3'-hydroxyl group; requires a central core of homology in the junction. The consensus cleavage sequence is 5'-(A/T)TT(C/G)-3'. Cleavage occurs on the 3'-side of the TT dinucleotide at the point of strand exchange. HJ branch migration catalyzed by RuvA-RuvB allows RuvC to scan DNA until it finds its consensus sequence, where it cleaves and resolves the cruciform DNA. This chain is Crossover junction endodeoxyribonuclease RuvC, found in Chloroflexus aurantiacus (strain ATCC 29364 / DSM 637 / Y-400-fl).